The following is a 329-amino-acid chain: uncharacterized protein (329 aa).

Residues 38–184 (IVKLILKSQE…MACLMRAKNF (147 aa)) form the SIS domain. Residue 56–61 (GVGKSA) coordinates ATP. CBS domains lie at 211 to 267 (QTTN…GLSL) and 276 to 329 (TLKP…GLKA).

Belongs to the SIS family. GutQ/KpsF subfamily.

This is an uncharacterized protein from Helicobacter pylori (strain J99 / ATCC 700824) (Campylobacter pylori J99).